The chain runs to 229 residues: 2,3-bisphosphoglycerate-dependent phosphoglycerate mutase (229 aa).

Residues 8 to 15 (RHGKSEWN), 21 to 22 (TG), arginine 60, 87 to 90 (ERHY), lysine 98, 114 to 115 (RR), and 183 to 184 (GN) each bind substrate. Histidine 9 functions as the Tele-phosphohistidine intermediate in the catalytic mechanism. The active-site Proton donor/acceptor is the glutamate 87.

The protein belongs to the phosphoglycerate mutase family. BPG-dependent PGAM subfamily. As to quaternary structure, homodimer.

It catalyses the reaction (2R)-2-phosphoglycerate = (2R)-3-phosphoglycerate. Its pathway is carbohydrate degradation; glycolysis; pyruvate from D-glyceraldehyde 3-phosphate: step 3/5. Its function is as follows. Catalyzes the interconversion of 2-phosphoglycerate and 3-phosphoglycerate. This is 2,3-bisphosphoglycerate-dependent phosphoglycerate mutase from Nautilia profundicola (strain ATCC BAA-1463 / DSM 18972 / AmH).